The following is a 77-amino-acid chain: Liver-expressed antimicrobial peptide 2 (77 aa).

An N-terminal signal peptide occupies residues 1–22 (MWHLKLCAVLMIFLLLLGQTDG). The propeptide occupies 23–37 (SPIPEVSSAKRRPRR). 2 disulfides stabilise this stretch: C54–C65 and C60–C70.

It belongs to the LEAP2 family.

It is found in the secreted. Functionally, has an antimicrobial activity. The polypeptide is Liver-expressed antimicrobial peptide 2 (LEAP2) (Macaca mulatta (Rhesus macaque)).